Consider the following 293-residue polypeptide: Elongation factor Ts (293 aa).

The interval 81–84 (TDFV) is involved in Mg(2+) ion dislocation from EF-Tu.

The protein belongs to the EF-Ts family.

Its subcellular location is the cytoplasm. Functionally, associates with the EF-Tu.GDP complex and induces the exchange of GDP to GTP. It remains bound to the aminoacyl-tRNA.EF-Tu.GTP complex up to the GTP hydrolysis stage on the ribosome. This is Elongation factor Ts from Teredinibacter turnerae (strain ATCC 39867 / T7901).